The primary structure comprises 108 residues: Large ribosomal subunit protein P2A (108 aa).

The interval 62 to 108 (LSSVPSGAPAAAAGGASAAAGGEATEEAAEEEAAEESDDDMSFGLFD) is disordered. Low complexity predominate over residues 68–84 (GAPAAAAGGASAAAGGE). The span at 85–102 (ATEEAAEEEAAEESDDDM) shows a compositional bias: acidic residues. Phosphoserine is present on S98.

Belongs to the eukaryotic ribosomal protein P1/P2 family.

Plays an important role in the elongation step of protein synthesis. This Candida albicans (Yeast) protein is Large ribosomal subunit protein P2A (RPP2A).